The sequence spans 287 residues: Lectin 10 (287 aa).

Residues 1 to 11 are Cytoplasmic-facing; the sequence is MALSNLKSNRT. A helical membrane pass occupies residues 12 to 31; that stretch reads LSSSLITIFIISLFLQYHNI. The Extracellular portion of the chain corresponds to 32 to 287; that stretch reads KSQSSWQSRQ…IINWSFESAL (256 aa). 4 N-linked (GlcNAc...) asparagine glycosylation sites follow: Asn-124, Asn-147, Asn-243, and Asn-280.

The protein belongs to the leguminous lectin family.

Its subcellular location is the membrane. In terms of biological role, may be involved in arbuscular mycorrhizal (AM) symbiosis with AM fungi. This is Lectin 10 from Medicago truncatula (Barrel medic).